A 239-amino-acid chain; its full sequence is Probable 2-phosphosulfolactate phosphatase (239 aa).

The protein belongs to the ComB family. It depends on Mg(2+) as a cofactor.

The catalysed reaction is (2R)-O-phospho-3-sulfolactate + H2O = (2R)-3-sulfolactate + phosphate. The polypeptide is Probable 2-phosphosulfolactate phosphatase (Clostridium botulinum (strain Okra / Type B1)).